The chain runs to 2348 residues: Transcription factor HIVEP3 (2348 aa).

A disordered region spans residues 1-105 (MDPDQSIKGT…AFMSPGKPEH (105 aa)). Residues 27 to 72 (IQTSVSSSAPYPGSGTTAPSESATQELLATQPFSGPSQEKTGQQQK) show a composition bias toward polar residues. 2 consecutive C2H2-type zinc fingers follow at residues 185–207 (YICQ…IRSH) and 213–235 (YPCG…RKSH). The interval 185 to 235 (YICQYCSRPCAKPSVLQKHIRSHTGERPYPCGPCGFSFKTKSNLYKHRKSH) is ZAS1. The no DNA binding activity or transactivation activity, but complete prevention of TRAF-dependent NF-Kappa-B activation; associates with TRAF2 and JUN stretch occupies residues 204–1055 (IRSHTGERPY…KGKQESSEEP (852 aa)). 3 disordered regions span residues 239-401 (IKAG…SPPN), 475-532 (DSVK…PLLR), and 561-628 (ADPE…TKKG). The tract at residues 257 to 280 (EMERIPGEEFEEPTEGESTDSEEE) is acidic 1. Positions 264–281 (EEFEEPTEGESTDSEEET) are enriched in acidic residues. Positions 298–323 (PLLSSSLYSSGSHGSSQERCSLSQSS) are enriched in low complexity. A compositionally biased stretch (basic and acidic residues) spans 338–352 (SSEHPLSHKPEDTHT). Composition is skewed to polar residues over residues 372–401 (TFLS…SPPN) and 485–495 (TRRSSVESPKS). Composition is skewed to low complexity over residues 513-527 (QSLL…STHP) and 589-605 (PLGG…SSKD). Positions 606-623 (PTSKPSDEPEPKESDLTK) are enriched in basic and acidic residues. Residues 633–663 (GANYECTICGARYKKRDNYEAHKKYYCSELQ) form a CCHC HIVEP-type zinc finger. 5 disordered regions span residues 692–1098 (KLGA…PPYT), 1229–1274 (LPPV…TSAP), 1386–1427 (EGCS…KADE), 1441–1555 (STED…EGTD), and 1654–1694 (EVHL…GEPA). The segment covering 736–749 (STKSPAEASKSAPS) has biased composition (low complexity). An acidic 2 region spans residues 844 to 865 (EEPDRPDTEPEPPPKEPEKTEE). The segment covering 845-865 (EPDRPDTEPEPPPKEPEKTEE) has biased composition (basic and acidic residues). Residues 885-891 (PKKKRLR) carry the Nuclear localization signal motif. Over residues 893–929 (AEMAQSSGESSFESSVPLSRSPSQESSISLSGSSRSA) the composition is skewed to low complexity. Over residues 930-939 (SFDREDHGKA) the composition is skewed to basic and acidic residues. Composition is skewed to polar residues over residues 975 to 985 (SEQSPNVPHSS), 1062 to 1073 (TKSSVPQISVGT), and 1247 to 1256 (SSSTEYSSDI). Residues 1409 to 1433 (METQQQKRVKEEEASKADEKLELVS) are a coiled coil. Composition is skewed to basic and acidic residues over residues 1416-1427 (RVKEEEASKADE), 1442-1452 (TEDRKKTEKPH), and 1518-1527 (VKKEDPKEQT). Positions 1538–1547 (LPLSDTSPKP) are enriched in low complexity. Basic and acidic residues predominate over residues 1665 to 1694 (SQKDPARVEKEEKQGKAEEGTPTSKRGEPA). 2 consecutive C2H2-type zinc fingers follow at residues 1720–1742 (YVCE…IRTH) and 1748–1772 (YVCK…SKAH). Residues 1720 to 1772 (YVCEECGIRCKKPSMLKKHIRTHTDVRPYVCKHCHFAFKTKGNLTKHMKSKAH) are ZAS2. The acidic 3 stretch occupies residues 1783 to 1841 (EELEAEEGTSDDLHQDSEGQEGAEAVEEHQFSDLEDSDSDSDLDEDEEEEEEEEESQDE). Disordered regions lie at residues 1786–1990 (EAEE…HLCG) and 2009–2038 (PAGL…ESPP). Over residues 1815–1840 (DLEDSDSDSDLDEDEEEEEEEEESQD) the composition is skewed to acidic residues. A compositionally biased stretch (polar residues) spans 1871 to 1902 (PDSTSDEVPQGSSISEATHLTASSCSTPSRGT). 5 tandem repeats follow at residues 1897–1900 (TPSR), 1927–1930 (SPRR), 1933–1936 (SPSK), 1961–1964 (SPAR), and 2024–2027 (SPTR). The segment covering 1952 to 1961 (KNDSSPQQCS) has biased composition (polar residues). The tract at residues 2053-2148 (SPSADKSGLG…QLLSRAPCPL (96 aa)) is 5 X 4 AA tandem repeats of [ST]-P-X-[RK]. Disordered stretches follow at residues 2184–2265 (SDLT…QGHQ) and 2284–2348 (KASS…PPSI). Positions 2203–2216 (SPSASVSPVAKVSK) are enriched in low complexity. Polar residues predominate over residues 2293–2314 (RSSSMDCLAETSTYSPPRSRNL).

Interacts with TRAF1 and TRAF2 as well as with JUN. Forms a multimeric complex with RUNX2 and E3 ubiquitin ligase WWP1. Post-translationally, phosphorylated on threonine and serine residues. Phosphorylation by cyclin-dependent kinase CDK1 decreases HIVEP3 DNA binding affinity, and by epidermal growth factor receptor kinase increases its DNA binding affinity. Expressed in macrophages, lymphocytes, brain, thymus, spleen and bone marrow. Expressed in osteoblasts, whole bone and, to a lesser extent, in osteoclasts.

The protein resides in the cytoplasm. It localises to the nucleus. Functionally, plays a role of transcription factor; binds to recognition signal sequences (Rss heptamer) for somatic recombination of immunoglobulin and T-cell receptor gene segments; Also binds to the kappa-B motif of gene such as S100A4, involved in cell progression and differentiation. Kappa-B motif is a gene regulatory element found in promoters and enhancers of genes involved in immunity, inflammation, and growth and that responds to viral antigens, mitogens, and cytokines. Involvement of HIVEP3 in cell growth is strengthened by the fact that its down-regulation promotes cell cycle progression with ultimate formation of multinucleated giant cells. Strongly inhibits TNF-alpha-induced NF-kappa-B activation; Interferes with nuclear factor NF-kappa-B by several mechanisms: as transcription factor, by competing for Kappa-B motif and by repressing transcription in the nucleus; through a non transcriptional process, by inhibiting nuclear translocation of RELA by association with TRAF2, an adapter molecule in the tumor necrosis factor signaling, which blocks the formation of IKK complex. Interaction with TRAF proteins inhibits both NF-Kappa-B-mediated and c-Jun N-terminal kinase/JNK-mediated responses that include apoptosis and pro-inflammatory cytokine gene expression. Positively regulates the expression of IL2 in T-cell. Essential regulator of adult bone formation. This Mus musculus (Mouse) protein is Transcription factor HIVEP3 (Hivep3).